Reading from the N-terminus, the 196-residue chain is Probable malonic semialdehyde reductase RutE (196 aa).

This sequence belongs to the nitroreductase family. HadB/RutE subfamily. Requires FMN as cofactor.

It catalyses the reaction 3-hydroxypropanoate + NADP(+) = 3-oxopropanoate + NADPH + H(+). In terms of biological role, may reduce toxic product malonic semialdehyde to 3-hydroxypropionic acid, which is excreted. The polypeptide is Probable malonic semialdehyde reductase RutE (Escherichia coli O45:K1 (strain S88 / ExPEC)).